Here is a 295-residue protein sequence, read N- to C-terminus: MTARIIDGKTISAELRGKLADEVARVVRDHGVTPGLAVVLVGSDPASEVYVRSKHKQTKEAGMASFEHKLPADVPQAELLALIGQLNADPAVHGILVQLPLPKGLDSNAVIAAVDPAKDVDGLNPVNAGRLASGLFALTPCTPLGCIVMAKQVHASLEGMNAIVIGRSNLVGKPLVQLLLNENATVTIAHSRSRDLPALCRQADLVFAAVGKPEMVRGNWIKPGATVIDVGINRTPSPDGGKDKLVGDVAFAEAKEVAGAITPVPGGVGLMTVACLLVNTLRAACAIHGLPKPAV.

NADP(+) is bound by residues 166–168, serine 191, and isoleucine 232; that span reads GRS.

It belongs to the tetrahydrofolate dehydrogenase/cyclohydrolase family. As to quaternary structure, homodimer.

The catalysed reaction is (6R)-5,10-methylene-5,6,7,8-tetrahydrofolate + NADP(+) = (6R)-5,10-methenyltetrahydrofolate + NADPH. It catalyses the reaction (6R)-5,10-methenyltetrahydrofolate + H2O = (6R)-10-formyltetrahydrofolate + H(+). The protein operates within one-carbon metabolism; tetrahydrofolate interconversion. Catalyzes the oxidation of 5,10-methylenetetrahydrofolate to 5,10-methenyltetrahydrofolate and then the hydrolysis of 5,10-methenyltetrahydrofolate to 10-formyltetrahydrofolate. In Rhodopseudomonas palustris (strain BisB18), this protein is Bifunctional protein FolD.